Reading from the N-terminus, the 127-residue chain is Snaclec CHH-B subunit alpha (127 aa).

Disulfide bonds link Cys4–Cys15, Cys32–Cys120, and Cys95–Cys112. Residues 11-121 (YDRYCYKPFK…CEQQHSFICK (111 aa)) form the C-type lectin domain.

The protein belongs to the snaclec family. Heterodimer of subunits alpha and beta; disulfide-linked. Expressed by the venom gland.

Its subcellular location is the secreted. Its function is as follows. Binds to the subunit GPIbalpha (GP1BA) of the platelet GPIb/V/IX receptor system. It inhibits ristocetin- and vWF-induced platelet aggregation in platelet-rich plasma by inhibiting the binding of vWF to GPIbalpha. In Crotalus horridus (Timber rattlesnake), this protein is Snaclec CHH-B subunit alpha.